A 760-amino-acid chain; its full sequence is MNRKNVTRTITAIAVVVLLGWSFFYFSDDTRGYKPVDTSVAITQINGDNVKSAQIDDREQQLRLILKKGNNETDGSEKVITKYPTGYAVDLFNALSAKNAKVSTVVNQGSILGELLVYVLPLLLLVGLFVMFSRMQGGARMGFGFGKSRAKQLSKDMPKTTFADVAGVDEAVEELYEIKDFLQNPSRYQALGAKIPKGVLLYGPPGTGKTLLARAVAGEAGVPFFTISGSDFVEMFVGVGASRVRDLFEQAKQNSPCIIFVDEIDAVGRQRGAGLGGGHDEREQTLNQLLVEMDGFGDRAGVILIAATNRPDILDPALLRPGRFDRQIPVSNPDLAGRRAVLRVHSKGKPMAADADLDGLAKRTVGMTGADLANVINEAALLTARENGTIITGPALEEAVDRVIGGPRRKGRIISEQEKKITAYHEGGHTLAAWAMPDIEPIYKVTILARGRTGGHAVAVPEEDKGLRTRSEMIAQLVFAMGGRAAEELVFREPTTGAVSDIEQATKIARSMVTEFGMSSKLGAVKYGSEHGDPFLGRTMGTQPDYSHEVAREIDEEVRKLIEAAHTEAWEILTEYRDVLDTLAGELLEKETLHRPELESIFADVEKRPRLTMFDDFGGRIPSDKPPIKTPGELAIERGEPWPQPVPEPAFKAAIAQATQAAEAARSDAGQTGHGANGSPAGTHRSGDRQYGSTQPDYGAPAGWHAPGWPPRSSHRPSYSGEPAPTYPGQPYPTGQADPGSDESSAEQDDEVSRTKPAHG.

Topologically, residues 1-5 (MNRKN) are cytoplasmic. A helical transmembrane segment spans residues 6 to 26 (VTRTITAIAVVVLLGWSFFYF). The Extracellular segment spans residues 27–110 (SDDTRGYKPV…KVSTVVNQGS (84 aa)). The helical transmembrane segment at 111–131 (ILGELLVYVLPLLLLVGLFVM) threads the bilayer. Residues 132–760 (FSRMQGGARM…EVSRTKPAHG (629 aa)) lie on the Cytoplasmic side of the membrane. 203–210 (GPPGTGKT) contributes to the ATP binding site. His-425 is a Zn(2+) binding site. Glu-426 is an active-site residue. The Zn(2+) site is built by His-429 and Asp-501. Residues 616–760 (DFGGRIPSDK…EVSRTKPAHG (145 aa)) form a disordered region. The span at 650 to 669 (AFKAAIAQATQAAEAARSDA) shows a compositional bias: low complexity. The segment covering 740–750 (GSDESSAEQDD) has biased composition (acidic residues).

This sequence in the central section; belongs to the AAA ATPase family. In the C-terminal section; belongs to the peptidase M41 family. Homohexamer. Zn(2+) is required as a cofactor.

It localises to the cell membrane. In terms of biological role, acts as a processive, ATP-dependent zinc metallopeptidase for both cytoplasmic and membrane proteins. Plays a role in the quality control of integral membrane proteins. This Mycobacterium tuberculosis (strain CDC 1551 / Oshkosh) protein is ATP-dependent zinc metalloprotease FtsH.